The sequence spans 68 residues: Large ribosomal subunit protein bL35 (68 aa).

It belongs to the bacterial ribosomal protein bL35 family.

This Onion yellows phytoplasma (strain OY-M) protein is Large ribosomal subunit protein bL35.